The primary structure comprises 241 residues: Uridylate kinase (241 aa).

Residue 14-17 participates in ATP binding; the sequence is KLSG. Gly-56 contributes to the UMP binding site. Gly-57 and Arg-61 together coordinate ATP. UMP-binding positions include Asp-77 and 138-145; that span reads TGNPFFTT. Positions 165, 171, and 174 each coordinate ATP.

Belongs to the UMP kinase family. In terms of assembly, homohexamer.

The protein localises to the cytoplasm. It carries out the reaction UMP + ATP = UDP + ADP. It functions in the pathway pyrimidine metabolism; CTP biosynthesis via de novo pathway; UDP from UMP (UMPK route): step 1/1. Its activity is regulated as follows. Inhibited by UTP. In terms of biological role, catalyzes the reversible phosphorylation of UMP to UDP. In Psychrobacter cryohalolentis (strain ATCC BAA-1226 / DSM 17306 / VKM B-2378 / K5), this protein is Uridylate kinase.